The primary structure comprises 538 residues: Cytochrome P450 52A4 (538 aa).

Residues 27–46 (WYILIPTILLTLNFLSILHT) form a helical membrane-spanning segment. Residue C485 participates in heme binding.

It belongs to the cytochrome P450 family. It depends on heme as a cofactor.

Its subcellular location is the membrane. Its function is as follows. Together with an NADPH cytochrome P450 the enzyme system catalyzes the terminal hydroxylation as the first step in the assimilation of alkanes and fatty acids. The sequence is that of Cytochrome P450 52A4 (CYP52A4) from Candida maltosa (Yeast).